A 156-amino-acid chain; its full sequence is MNPLRRKRLLIILAILAGVGIAVGLAMSALRENINLFYTPTQIANGEAPLDTRIRAGGMVEQGSLKRSGDSLDVTFVVTDFNKAVTITYRGILPDLFREGQGIVALGKLNADAVVVADEVLAKHDEKYMPPEVTKALKDSGQSRLARIRSLPRRAK.

At 1 to 8 the chain is on the cytoplasmic side; sequence MNPLRRKR. A helical; Signal-anchor for type II membrane protein membrane pass occupies residues 9–29; sequence LLIILAILAGVGIAVGLAMSA. Residues 30 to 156 are Periplasmic-facing; sequence LRENINLFYT…RIRSLPRRAK (127 aa). Residues H124 and Y128 each coordinate heme.

The protein belongs to the CcmE/CycJ family.

It is found in the cell inner membrane. Heme chaperone required for the biogenesis of c-type cytochromes. Transiently binds heme delivered by CcmC and transfers the heme to apo-cytochromes in a process facilitated by CcmF and CcmH. This is Cytochrome c-type biogenesis protein CcmE from Pseudomonas fluorescens.